Here is a 320-residue protein sequence, read N- to C-terminus: MENKNTFSWVKEQMTRSISVSIMIYVITQTSISNAYPIFAQQGYENPREATGRIVCANCHLASKPVDIEVPQAVLPDTVFEAVLRIPYDMQLKQVLANGKKGGLNVGAVLILPEGFELAPPDRISPELKEKIGNLSFQSYRPDKKNILVIGPVPGKKYSEIVFPILSPDPATKKDAYFLKYPIYVGGNRGRGQIYPDGSKSNNTVYNATSTGIVKKILRKEKGGYEISIVDASDGRQVIDTIPPGPELLVSEGESIKLDQPLTSNPNVGGFGQGDAEIVLQDPLRVQGLLFFFASVILAQVFLVLKKKQFEKVQLYEMNF.

A signal peptide spans 1-35 (MENKNTFSWVKEQMTRSISVSIMIYVITQTSISNA). Positions 36, 56, 59, and 60 each coordinate heme. The chain crosses the membrane as a helical span at residues 286–306 (VQGLLFFFASVILAQVFLVLK).

It belongs to the cytochrome f family. In terms of assembly, the 4 large subunits of the cytochrome b6-f complex are cytochrome b6, subunit IV (17 kDa polypeptide, petD), cytochrome f and the Rieske protein, while the 4 small subunits are PetG, PetL, PetM and PetN. The complex functions as a dimer. The cofactor is heme.

It is found in the plastid. Its subcellular location is the chloroplast thylakoid membrane. Its function is as follows. Component of the cytochrome b6-f complex, which mediates electron transfer between photosystem II (PSII) and photosystem I (PSI), cyclic electron flow around PSI, and state transitions. The polypeptide is Cytochrome f (Lolium perenne (Perennial ryegrass)).